We begin with the raw amino-acid sequence, 101 residues long: Small ribosomal subunit protein uS14 (101 aa).

It belongs to the universal ribosomal protein uS14 family. Part of the 30S ribosomal subunit. Contacts proteins S3 and S10.

Its function is as follows. Binds 16S rRNA, required for the assembly of 30S particles and may also be responsible for determining the conformation of the 16S rRNA at the A site. The sequence is that of Small ribosomal subunit protein uS14 from Hydrogenovibrio crunogenus (strain DSM 25203 / XCL-2) (Thiomicrospira crunogena).